We begin with the raw amino-acid sequence, 145 residues long: Superoxide dismutase [Mn/Fe] (145 aa).

Residues His10 and His64 each coordinate Fe(3+). Positions 10 and 64 each coordinate Mn(2+). Positions 126 to 145 are disordered; it reads TSTANQDTPISEGKKPILGL.

It belongs to the iron/manganese superoxide dismutase family. Mn(2+) is required as a cofactor. Requires Fe(3+) as cofactor.

It carries out the reaction 2 superoxide + 2 H(+) = H2O2 + O2. Destroys superoxide anion radicals which are normally produced within the cells and which are toxic to biological systems. Catalyzes the dismutation of superoxide anion radicals into O2 and H2O2 by successive reduction and oxidation of the transition metal ion at the active site. The sequence is that of Superoxide dismutase [Mn/Fe] (sodA) from Streptococcus mitis.